Reading from the N-terminus, the 1005-residue chain is Negative regulator of pleiotropic drug resistance STB5 (1005 aa).

A disordered region spans residues 1-28 (MSGPDKGSDSGQTANDPKQKKARNGQME). The zn(2)-C6 fungal-type DNA-binding region spans 32-59 (CARCRKLKKKCPRQLPECSNCLKAREPC). 3 disordered regions span residues 129–151 (GGEQ…SINR), 666–693 (KGKS…EDVK), and 763–831 (TKPT…SSLR). The span at 673–693 (KRFEKSKESDSDRGVTEEDVK) shows a compositional bias: basic and acidic residues. The span at 763 to 773 (TKPTANIMNDQ) shows a compositional bias: polar residues. Basic and acidic residues predominate over residues 792-801 (EGPKSLKEGN).

The protein localises to the nucleus. In terms of biological role, transcription factor that negatively regulates pleiotropic drug resistance genes, including the ABC transporter genes CDR1, PDH1, and YOR1. This is Negative regulator of pleiotropic drug resistance STB5 from Candida glabrata (strain ATCC 2001 / BCRC 20586 / JCM 3761 / NBRC 0622 / NRRL Y-65 / CBS 138) (Yeast).